The sequence spans 367 residues: Glutamate 5-kinase (367 aa).

Residue Lys9 participates in ATP binding. Substrate contacts are provided by Ser49, Asp136, and Asn148. Residues 168–169 (TD) and 210–216 (TGGMKSK) contribute to the ATP site. The PUA domain maps to 276-350 (SGQIEIDAGA…GMQSQHIQAR (75 aa)).

Belongs to the glutamate 5-kinase family.

The protein resides in the cytoplasm. It carries out the reaction L-glutamate + ATP = L-glutamyl 5-phosphate + ADP. It participates in amino-acid biosynthesis; L-proline biosynthesis; L-glutamate 5-semialdehyde from L-glutamate: step 1/2. Its function is as follows. Catalyzes the transfer of a phosphate group to glutamate to form L-glutamate 5-phosphate. This is Glutamate 5-kinase from Bacillus cereus (strain ATCC 10987 / NRS 248).